We begin with the raw amino-acid sequence, 520 residues long: Beta-glucosidase 45 (520 aa).

An N-terminal signal peptide occupies residues 1–22; that stretch reads MKNLTSFVIVILLQSLLFHVYG. Asn-3 carries an N-linked (GlcNAc...) asparagine glycan. A beta-D-glucoside is bound by residues Gln-52, His-155, and 200–201; that span reads NE. The Proton donor role is filled by Glu-201. The cysteines at positions 220 and 227 are disulfide-linked. An N-linked (GlcNAc...) asparagine glycan is attached at Asn-226. Tyr-344 lines the a beta-D-glucoside pocket. Cys-352 and Cys-357 are joined by a disulfide. Residue Asn-378 is glycosylated (N-linked (GlcNAc...) asparagine). Glu-417 is an a beta-D-glucoside binding site. Residue Glu-417 is the Nucleophile of the active site. Residue Asn-435 is glycosylated (N-linked (GlcNAc...) asparagine). Residues Trp-466, 473 to 474, and Phe-482 each bind a beta-D-glucoside; that span reads EW.

It belongs to the glycosyl hydrolase 1 family. As to expression, expressed in stems and siliques.

It catalyses the reaction Hydrolysis of terminal, non-reducing beta-D-glucosyl residues with release of beta-D-glucose.. Hydrolyzes p-nitrophenyl beta-D-glucoside and natural glucosides such as syringin, coniferin and p-coumaryl alcohol glucoside. May be involved in lignification by hydrolyzing monolignol glucosides. The polypeptide is Beta-glucosidase 45 (Arabidopsis thaliana (Mouse-ear cress)).